Here is a 40-residue protein sequence, read N- to C-terminus: Dolichyl-diphosphooligosaccharide--protein glycosyltransferase subunit 4 (40 aa).

Residues 1–4 are Lumenal-facing; that stretch reads MITD. Residues 5–25 form a helical membrane-spanning segment; the sequence is VQLAIFSNVLGVFLFLLVVAY. Residues 26-40 are Cytoplasmic-facing; the sequence is HYINANTGKSSIKNK.

Belongs to the OST4 family. Component of the oligosaccharyltransferase (OST) complex.

It localises to the endoplasmic reticulum membrane. Subunit of the oligosaccharyl transferase (OST) complex that catalyzes the initial transfer of a defined glycan (Glc(3)Man(9)GlcNAc(2) in eukaryotes) from the lipid carrier dolichol-pyrophosphate to an asparagine residue within an Asn-X-Ser/Thr consensus motif in nascent polypeptide chains, the first step in protein N-glycosylation. N-glycosylation occurs cotranslationally and the complex associates with the Sec61 complex at the channel-forming translocon complex that mediates protein translocation across the endoplasmic reticulum (ER). All subunits are required for a maximal enzyme activity. The polypeptide is Dolichyl-diphosphooligosaccharide--protein glycosyltransferase subunit 4 (Drosophila mojavensis (Fruit fly)).